Here is a 303-residue protein sequence, read N- to C-terminus: Taste receptor type 2 member 13 (303 aa).

Topologically, residues 1-7 are extracellular; sequence MESALPS. A helical membrane pass occupies residues 8 to 28; that stretch reads IFTLVIIAEFIIGNLSNGFIV. Residues 29 to 55 are Cytoplasmic-facing; the sequence is LINCIDWVSKRELSSVDKLLIILAISR. Residues 56–76 form a helical membrane-spanning segment; the sequence is IGLIWEILVSWFLALHYLAIF. Residues 77–85 lie on the Extracellular side of the membrane; that stretch reads VSGTGLRIM. The helical transmembrane segment at 86–106 threads the bilayer; the sequence is IFSWIVSNHFNLWLATIFSIF. Over 107–128 the chain is Cytoplasmic; sequence YLLKIASFSSPAFLYLKWRVNK. Residues 129 to 149 traverse the membrane as a helical segment; sequence VILMILLGTLVFLFLNLIQIN. At 150–184 the chain is on the extracellular side; sequence MHIKDWLDRYERNTTWNFSMSDFETFSVSVKFTMT. Residues asparagine 162 and asparagine 166 are each glycosylated (N-linked (GlcNAc...) asparagine). A helical membrane pass occupies residues 185–205; sequence MFSLTPFTVAFISFLLLIFSL. The Cytoplasmic segment spans residues 206-232; that stretch reads QKHLQKMQLNYKGHRDPRTKVHTNALK. A helical membrane pass occupies residues 233 to 253; the sequence is IVISFLLFYASFFLCVLISWI. The Extracellular portion of the chain corresponds to 254 to 261; that stretch reads SELYQNTV. The helical transmembrane segment at 262–282 threads the bilayer; sequence IYMLCETIGVFSPSSHSFLLI. The Cytoplasmic portion of the chain corresponds to 283 to 303; sequence LGNAKLRQAFLLVAAKVWAKR.

Belongs to the G-protein coupled receptor T2R family. Expressed in subsets of taste receptor cells of the tongue and palate epithelium and exclusively in gustducin-positive cells.

The protein localises to the membrane. Functionally, receptor that may play a role in the perception of bitterness and is gustducin-linked. May play a role in sensing the chemical composition of the gastrointestinal content. The activity of this receptor may stimulate alpha gustducin, mediate PLC-beta-2 activation and lead to the gating of TRPM5. This Homo sapiens (Human) protein is Taste receptor type 2 member 13 (TAS2R13).